We begin with the raw amino-acid sequence, 83 residues long: Molybdopterin synthase sulfur carrier subunit (83 aa).

At Gly-83 the chain carries 1-thioglycine; alternate. Position 83 is a glycyl adenylate; alternate (Gly-83).

This sequence belongs to the MoaD family. MOCS2A subfamily. As to quaternary structure, heterotetramer; composed of 2 small (MOCS2A) and 2 large (MOCS2B) subunits. Post-translationally, C-terminal thiocarboxylation occurs in 2 steps, it is first acyl-adenylated (-COAMP) via the hesA/moeB/thiF part of MOCS3, then thiocarboxylated (-COSH) via the rhodanese domain of MOCS3.

It localises to the cytoplasm. It participates in cofactor biosynthesis; molybdopterin biosynthesis. Functionally, acts as a sulfur carrier required for molybdopterin biosynthesis. Component of the molybdopterin synthase complex that catalyzes the conversion of precursor Z into molybdopterin by mediating the incorporation of 2 sulfur atoms into precursor Z to generate a dithiolene group. In the complex, serves as sulfur donor by being thiocarboxylated (-COSH) at its C-terminus by MOCS3. After interaction with MOCS2B, the sulfur is then transferred to precursor Z to form molybdopterin. The chain is Molybdopterin synthase sulfur carrier subunit from Chlamydomonas reinhardtii (Chlamydomonas smithii).